The primary structure comprises 579 residues: DELLA protein GAIP (579 aa).

The segment at 1–25 is disordered; the sequence is MKREHHYLHPRPEPPSVATGSNRES. A DELLA motif motif is present at residues 46–50; sequence DELLA. Residues 202-570 enclose the GRAS domain; sequence VDSQENGIQL…RPLIATSAWK (369 aa). The interval 209 to 263 is leucine repeat I (LRI); that stretch reads IQLVHALMVCAEAVQQNNLNLAEALVKRIDYLAVSQAGAMRKVATFFAEALARRI. Positions 281-346 are VHIID; the sequence is QMHFYESCPY…SGPPTFRLTG (66 aa). A VHIID motif is present at residues 312-316; sequence VHVID. Residues 360–392 are leucine repeat II (LRII); that stretch reads DVGWKLVKFAETLHVEFEYRGFVANSLADLDAS. A PFYRE region spans residues 404-491; it reads VVVNSVFELH…EMYLGKQICN (88 aa). The short motif at 412–416 is the LXXLL motif element; it reads LHQLL. Residues 494 to 570 form an SAW region; the sequence is ACEGADRVER…RPLIATSAWK (77 aa).

This sequence belongs to the GRAS family. DELLA subfamily. Post-translationally, phosphorylated. Ubiquitinated. Upon GA application it is ubiquitinated, leading to its subsequent degradation.

It localises to the nucleus. Probable transcriptional regulator that acts as a repressor of the gibberellin (GA) signaling pathway. Probably acts by participating in large multiprotein complexes that represses transcription of GA-inducible genes. Upon GA application, it is degraded by the proteasome, allowing the GA signaling pathway. The protein is DELLA protein GAIP (GAIP) of Cucurbita maxima (Pumpkin).